The following is a 63-amino-acid chain: Sec-independent protein translocase protein TatA (63 aa).

The helical transmembrane segment at 1 to 21 (MGGLSVGSVVLIALVALLIFG) threads the bilayer.

This sequence belongs to the TatA/E family. As to quaternary structure, forms a complex with TatC.

It localises to the cell membrane. Its function is as follows. Part of the twin-arginine translocation (Tat) system that transports large folded proteins containing a characteristic twin-arginine motif in their signal peptide across membranes. TatA could form the protein-conducting channel of the Tat system. The sequence is that of Sec-independent protein translocase protein TatA from Shouchella clausii (strain KSM-K16) (Alkalihalobacillus clausii).